The primary structure comprises 485 residues: Glutamyl-tRNA(Gln) amidotransferase subunit A (485 aa).

Active-site charge relay system residues include Lys-79 and Ser-154. Residue Ser-178 is the Acyl-ester intermediate of the active site.

It belongs to the amidase family. GatA subfamily. Heterotrimer of A, B and C subunits.

The catalysed reaction is L-glutamyl-tRNA(Gln) + L-glutamine + ATP + H2O = L-glutaminyl-tRNA(Gln) + L-glutamate + ADP + phosphate + H(+). Allows the formation of correctly charged Gln-tRNA(Gln) through the transamidation of misacylated Glu-tRNA(Gln) in organisms which lack glutaminyl-tRNA synthetase. The reaction takes place in the presence of glutamine and ATP through an activated gamma-phospho-Glu-tRNA(Gln). The chain is Glutamyl-tRNA(Gln) amidotransferase subunit A from Staphylococcus aureus (strain MW2).